The primary structure comprises 1218 residues: Protein STICHEL (1218 aa).

The segment at 24–136 is disordered; sequence AGRVLRDPGT…SDARNGGDSY (113 aa). Composition is skewed to polar residues over residues 32 to 46, 54 to 73, and 86 to 95; these read GTTS…SSRS, ASRN…SSTN, and WKTQKSSSEK. The Bipartite nuclear localization signal signature appears at 163–180; that stretch reads RKSNVGSCKKKSKKKISS. Short sequence motifs (PEST) lie at residues 273–304 and 425–449; these read RNPS…LPGR and RSQD…ETIR. 490–497 lines the ATP pocket; the sequence is GPRGTGKT. The Zn(2+) site is built by cysteine 509, cysteine 518, cysteine 521, and cysteine 524. Positions 762–788 form a coiled coil; the sequence is EADMEGLKHALKLLSEAEKQLRVSNDR. Residues 802–828 form a disordered region; the sequence is MPSPGTTHTGSSRRQSSRATDDDPASV. The segment covering 804–819 has biased composition (polar residues); the sequence is SPGTTHTGSSRRQSSR. 2 consecutive short sequence motifs (bipartite nuclear localization signal) follow at residues 1178 to 1195 and 1196 to 1213; these read RRSK…SRRN and RKSR…RKAE.

The protein belongs to the DnaX/STICHEL family. In terms of assembly, interacts with BLT. As to expression, ubiquitous.

It localises to the nucleus. Acts as a key regulator of trichome branching through an endoreduplication-independent pathway. The sequence is that of Protein STICHEL (STI) from Arabidopsis thaliana (Mouse-ear cress).